The following is a 152-amino-acid chain: MNNSMILLMVIASFVAGYLSTMNLWANSIGDIRLHLNDFYMVLLMVGWMIVMCYILMKSHMGITKTQLIITITIIIIIVYAIRTQAFIDDKQYLNGMIPHHSMAITMSKWIVNRTKDPRIKQLATDIIISQQNEINEMNSILDERKLQNKVF.

N-linked (GlcNAc...) asparagine; by host glycosylation is present at Asn-2. The next 3 membrane-spanning stretches (helical) occupy residues Met-5 to Trp-25, Leu-36 to Leu-56, and Leu-68 to Ile-88. Asn-113 is a glycosylation site (N-linked (GlcNAc...) asparagine; by host).

Its subcellular location is the membrane. This is an uncharacterized protein from Acanthamoeba polyphaga mimivirus (APMV).